The chain runs to 330 residues: Putative protein N-methyltransferase FAM86B1 (330 aa).

S-adenosyl-L-methionine-binding positions include tryptophan 139, glycine 165–glycine 167, tryptophan 228, and alanine 247.

This sequence belongs to the class I-like SAM-binding methyltransferase superfamily. EEF2KMT family.

This is Putative protein N-methyltransferase FAM86B1 from Homo sapiens (Human).